The primary structure comprises 420 residues: Serine/threonine-protein kinase PCRK2 (420 aa).

The tract at residues 1 to 64 is disordered; the sequence is MKCFLFPLGD…SNTSMSAREN (64 aa). Over residues 22-36 the composition is skewed to polar residues; it reads SPTSNFSDVNKSGSD. Over residues 42-58 the composition is skewed to low complexity; sequence VSGTSTVSSTGRNSNTS. Thr70 carries the post-translational modification Phosphothreonine. Positions 81–366 constitute a Protein kinase domain; sequence FSRSGMIGEG…EVLEMVTKIV (286 aa). Residues 87-95 and Lys115 contribute to the ATP site; that span reads IGEGGFGCV. Tyr164 bears the Phosphotyrosine mark. Asp215 acts as the Proton acceptor in catalysis. Phosphoserine occurs at positions 219 and 249. Thr250 and Thr255 each carry phosphothreonine. At Tyr263 the chain carries Phosphotyrosine. Residues 369 to 396 form a disordered region; it reads SSPGNGGKKPQLVPLKSQETSRVEEGKN. Residues 387 to 396 show a composition bias toward basic and acidic residues; the sequence is ETSRVEEGKN.

Belongs to the protein kinase superfamily. Ser/Thr protein kinase family. As to quaternary structure, interacts with FLS2.

It localises to the cell membrane. The catalysed reaction is L-seryl-[protein] + ATP = O-phospho-L-seryl-[protein] + ADP + H(+). It carries out the reaction L-threonyl-[protein] + ATP = O-phospho-L-threonyl-[protein] + ADP + H(+). Its function is as follows. Functions redundantly with PCRK1 in basal resistance against bacterial pathogens and in regulation of plant immunity. Functions together with PCRK1 downstream of the pathogen-associated molecular pattern (PAMP) receptor FLS2. Contributes to the induction of SARD1 and CBP60G, which are transcriptional activator of ICS1, an enzyme involved in salicylate (SA) biosynthesis upon pathogen attack. The sequence is that of Serine/threonine-protein kinase PCRK2 from Arabidopsis thaliana (Mouse-ear cress).